We begin with the raw amino-acid sequence, 304 residues long: Recombination-associated protein RdgC (304 aa).

It belongs to the RdgC family.

Its subcellular location is the cytoplasm. It localises to the nucleoid. In terms of biological role, may be involved in recombination. In Shewanella baltica (strain OS223), this protein is Recombination-associated protein RdgC.